The following is a 180-amino-acid chain: dCTP deaminase, dUMP-forming (180 aa).

Residues 96–101 (RSSLGR), aspartate 113, 121–123 (TLE), glutamine 142, tyrosine 156, and glutamine 163 each bind dCTP. Glutamate 123 functions as the Proton donor/acceptor in the catalytic mechanism.

Belongs to the dCTP deaminase family. As to quaternary structure, homotrimer.

The catalysed reaction is dCTP + 2 H2O = dUMP + NH4(+) + diphosphate. The protein operates within pyrimidine metabolism; dUMP biosynthesis; dUMP from dCTP: step 1/1. Its function is as follows. Bifunctional enzyme that catalyzes both the deamination of dCTP to dUTP and the hydrolysis of dUTP to dUMP without releasing the toxic dUTP intermediate. This Aquifex aeolicus (strain VF5) protein is dCTP deaminase, dUMP-forming.